The primary structure comprises 374 residues: Chaperone protein DnaJ (374 aa).

The J domain maps to D5–G70. The CR-type zinc-finger motif lies at G133–T210. Zn(2+) is bound by residues C146, C149, C162, C165, C184, C187, C198, and C201. CXXCXGXG motif repeat units follow at residues C146–G153, C162–G169, C184–G191, and C198–G205.

The protein belongs to the DnaJ family. In terms of assembly, homodimer. Zn(2+) serves as cofactor.

The protein localises to the cytoplasm. Its function is as follows. Participates actively in the response to hyperosmotic and heat shock by preventing the aggregation of stress-denatured proteins and by disaggregating proteins, also in an autonomous, DnaK-independent fashion. Unfolded proteins bind initially to DnaJ; upon interaction with the DnaJ-bound protein, DnaK hydrolyzes its bound ATP, resulting in the formation of a stable complex. GrpE releases ADP from DnaK; ATP binding to DnaK triggers the release of the substrate protein, thus completing the reaction cycle. Several rounds of ATP-dependent interactions between DnaJ, DnaK and GrpE are required for fully efficient folding. Also involved, together with DnaK and GrpE, in the DNA replication of plasmids through activation of initiation proteins. The sequence is that of Chaperone protein DnaJ from Coxiella burnetii (strain CbuG_Q212) (Coxiella burnetii (strain Q212)).